A 31-amino-acid polypeptide reads, in one-letter code: Antifungal protein 1 (31 aa).

Composition is skewed to basic and acidic residues over residues 1–10 (PGAGSQEERM) and 18–31 (DFSH…MVRE). The disordered stretch occupies residues 1–31 (PGAGSQEERMQGQMEGQDFSHEERFLSMVRE).

In terms of assembly, heterodimer; disulfide-linked. Disulfide bonds.

In terms of biological role, has antifungal activity against C.gloeosporioides but not against B.cinerea and Fusarium sp. or against various yeasts. Has no antibacterial activity. This Passiflora alata (Winged-stem passion flower) protein is Antifungal protein 1.